Consider the following 437-residue polypeptide: GTPase Der (437 aa).

EngA-type G domains lie at Pro-4–Ala-167 and Ile-176–Arg-352. Residues Gly-10–Ser-17, Asp-57–Ile-61, Asn-119–Asp-122, Gly-182–Ser-189, Asp-230–Met-234, and Asn-295–Asp-298 each bind GTP. Positions Lys-353–Lys-437 constitute a KH-like domain.

This sequence belongs to the TRAFAC class TrmE-Era-EngA-EngB-Septin-like GTPase superfamily. EngA (Der) GTPase family. As to quaternary structure, associates with the 50S ribosomal subunit.

Its function is as follows. GTPase that plays an essential role in the late steps of ribosome biogenesis. The protein is GTPase Der of Leuconostoc citreum (strain KM20).